A 231-amino-acid chain; its full sequence is Sensory transduction protein BceR (231 aa).

One can recognise a Response regulatory domain in the interval 3–116; it reads KLLLIEDDES…VLIAKIQAMF (114 aa). At Asp52 the chain carries 4-aspartylphosphate. A DNA-binding region (ompR/PhoB-type) is located at residues 127–225; the sequence is STIKTWCGAA…KVGQGYIAKE (99 aa).

In terms of processing, phosphorylated by BceS.

It localises to the cytoplasm. Member of the two-component regulatory system BceS/BceR involved in the regulation of bacitracin resistance. When activated by BceS, binds to the upstream region of the bceAB promoter and up-regulates the expression of these two genes. In Bacillus subtilis (strain 168), this protein is Sensory transduction protein BceR (bceR).